The following is a 212-amino-acid chain: Uridine kinase (212 aa).

13 to 20 (GGSGSGKT) contributes to the ATP binding site.

It belongs to the uridine kinase family.

Its subcellular location is the cytoplasm. The catalysed reaction is uridine + ATP = UMP + ADP + H(+). It carries out the reaction cytidine + ATP = CMP + ADP + H(+). The protein operates within pyrimidine metabolism; CTP biosynthesis via salvage pathway; CTP from cytidine: step 1/3. Its pathway is pyrimidine metabolism; UMP biosynthesis via salvage pathway; UMP from uridine: step 1/1. This chain is Uridine kinase, found in Bacillus thuringiensis (strain Al Hakam).